We begin with the raw amino-acid sequence, 338 residues long: Electron transfer flavoprotein subunit alpha (338 aa).

275–303 (IYIACAISGAIQPLAGMTGSDCIIAINKD) contributes to the FAD binding site.

It belongs to the ETF alpha-subunit/FixB family. As to quaternary structure, heterodimer of an alpha and a beta subunit. The cofactor is FAD.

The electron transfer flavoprotein serves as a specific electron acceptor for other dehydrogenases. It transfers the electrons to the main respiratory chain via ETF-ubiquinone oxidoreductase (ETF dehydrogenase). This chain is Electron transfer flavoprotein subunit alpha (etfA), found in Megasphaera elsdenii.